The chain runs to 232 residues: Probable metallo-hydrolase M6_Spy0554 (232 aa).

Residues His75, His77, Asp79, His80, His155, Asp174, and His215 each coordinate Zn(2+).

Requires Zn(2+) as cofactor.

The chain is Probable metallo-hydrolase M6_Spy0554 from Streptococcus pyogenes serotype M6 (strain ATCC BAA-946 / MGAS10394).